Reading from the N-terminus, the 160-residue chain is SsrA-binding protein (160 aa).

Residues leucine 130–valine 160 form a disordered region. Positions lysine 139–arginine 150 are enriched in basic and acidic residues. A compositionally biased stretch (basic residues) spans glutamine 151 to valine 160.

This sequence belongs to the SmpB family.

The protein localises to the cytoplasm. Its function is as follows. Required for rescue of stalled ribosomes mediated by trans-translation. Binds to transfer-messenger RNA (tmRNA), required for stable association of tmRNA with ribosomes. tmRNA and SmpB together mimic tRNA shape, replacing the anticodon stem-loop with SmpB. tmRNA is encoded by the ssrA gene; the 2 termini fold to resemble tRNA(Ala) and it encodes a 'tag peptide', a short internal open reading frame. During trans-translation Ala-aminoacylated tmRNA acts like a tRNA, entering the A-site of stalled ribosomes, displacing the stalled mRNA. The ribosome then switches to translate the ORF on the tmRNA; the nascent peptide is terminated with the 'tag peptide' encoded by the tmRNA and targeted for degradation. The ribosome is freed to recommence translation, which seems to be the essential function of trans-translation. The sequence is that of SsrA-binding protein from Alkalilimnicola ehrlichii (strain ATCC BAA-1101 / DSM 17681 / MLHE-1).